Here is an 874-residue protein sequence, read N- to C-terminus: Leucine--tRNA ligase (874 aa).

Residues 43 to 53 carry the 'HIGH' region motif; that stretch reads PYPSGRIHIGH. The disordered stretch occupies residues 614–634; that stretch reads LDDGSPVTVGPPEKMSKSKKN. The 'KMSKS' region motif lies at 627–631; it reads KMSKS. Lys-630 contributes to the ATP binding site.

Belongs to the class-I aminoacyl-tRNA synthetase family.

It is found in the cytoplasm. The enzyme catalyses tRNA(Leu) + L-leucine + ATP = L-leucyl-tRNA(Leu) + AMP + diphosphate. The protein is Leucine--tRNA ligase of Azorhizobium caulinodans (strain ATCC 43989 / DSM 5975 / JCM 20966 / LMG 6465 / NBRC 14845 / NCIMB 13405 / ORS 571).